We begin with the raw amino-acid sequence, 313 residues long: uncharacterized protein (313 aa).

2 helical membrane passes run 42–64 (LVVLFNGALLLLCMGTGYVLFLT) and 74–96 (VRAYGIFFLIFLLLFLLINTLYV).

It localises to the cell membrane. This is an uncharacterized protein from Treponema pallidum (strain Nichols).